Here is a 110-residue protein sequence, read N- to C-terminus: Iron-sulfur cluster assembly protein CyaY (110 aa).

It belongs to the frataxin family.

Its function is as follows. Involved in iron-sulfur (Fe-S) cluster assembly. May act as a regulator of Fe-S biogenesis. This is Iron-sulfur cluster assembly protein CyaY from Variovorax paradoxus (strain S110).